A 743-amino-acid chain; its full sequence is NAD(P)H-quinone oxidoreductase subunit 5, chloroplastic (743 aa).

The next 14 membrane-spanning stretches (helical) occupy residues 9–29 (WIIPFVPLPVPMLIGVGLLLF), 40–60 (WAFHSVLLLSIVMIFSIDLSI), 89–109 (IDPLTSIMLILITTVGIMVLI), 125–145 (FAYMSFFSTSMLGLVTSSNLI), 147–167 (IYIFWELVGMCSYLLIGFWFT), 184–204 (IGDLGLLLGILGFYWITGSFE), 219–239 (NEVNLVFLTICAVLLFAGAVA), 258–278 (TPISALIHAATMVAAGIFLVA), 280–300 (LLPLFIVIPYILNLISFIGII), 396–416 (TAFFLGTLSLCGIPPLACFWS), 425–445 (WLYSPIFAIIACSTAGLTAFY), 548–568 (LLPLLVLVLFTLFVGAIGIPF), 607–627 (IFSVSIAYFGIVIASFLYKPV), and 723–743 (YLFLYLSYVSIFLLIYYFLNL).

It belongs to the complex I subunit 5 family. In terms of assembly, NDH is composed of at least 16 different subunits, 5 of which are encoded in the nucleus.

The protein localises to the plastid. Its subcellular location is the chloroplast thylakoid membrane. It carries out the reaction a plastoquinone + NADH + (n+1) H(+)(in) = a plastoquinol + NAD(+) + n H(+)(out). The enzyme catalyses a plastoquinone + NADPH + (n+1) H(+)(in) = a plastoquinol + NADP(+) + n H(+)(out). NDH shuttles electrons from NAD(P)H:plastoquinone, via FMN and iron-sulfur (Fe-S) centers, to quinones in the photosynthetic chain and possibly in a chloroplast respiratory chain. The immediate electron acceptor for the enzyme in this species is believed to be plastoquinone. Couples the redox reaction to proton translocation, and thus conserves the redox energy in a proton gradient. The chain is NAD(P)H-quinone oxidoreductase subunit 5, chloroplastic (ndhF) from Carpenteria californica (Tree anemone).